A 398-amino-acid chain; its full sequence is LIM domain-binding protein 2 (398 aa).

Disordered regions lie at residues 245-280 (PPAE…TSAY) and 354-398 (DAAN…QASQ). Residues 263 to 279 (STNNASNSNAGNNATSA) are compositionally biased toward low complexity. The LIM interaction domain (LID) domain maps to 323 to 362 (DVMVVGEPTLMGGEFGDEDERLITRLENTQYDAANGMDDE).

It belongs to the LDB family. In terms of tissue distribution, expressed in adult brain, lung, spleen and kidney. Isoform b is generally expressed at a higher level than isoform a.

Its subcellular location is the nucleus. In terms of biological role, binds to the LIM domain of a wide variety of LIM domain-containing transcription factors. This chain is LIM domain-binding protein 2, found in Xenopus laevis (African clawed frog).